The primary structure comprises 121 residues: Small ribosomal subunit protein uS13 (121 aa).

Residues 94-121 (GLPVRGQRTRTNSRTRKGPKKGAAALKK) form a disordered region.

This sequence belongs to the universal ribosomal protein uS13 family. As to quaternary structure, part of the 30S ribosomal subunit. Forms a loose heterodimer with protein S19. Forms two bridges to the 50S subunit in the 70S ribosome.

Located at the top of the head of the 30S subunit, it contacts several helices of the 16S rRNA. In the 70S ribosome it contacts the 23S rRNA (bridge B1a) and protein L5 of the 50S subunit (bridge B1b), connecting the 2 subunits; these bridges are implicated in subunit movement. Contacts the tRNAs in the A and P-sites. This chain is Small ribosomal subunit protein uS13, found in Leptothrix cholodnii (strain ATCC 51168 / LMG 8142 / SP-6) (Leptothrix discophora (strain SP-6)).